A 533-amino-acid polypeptide reads, in one-letter code: Calcium-dependent protein kinase 19 (533 aa).

2 stretches are compositionally biased toward polar residues: residues 1–12 (MGSCCSRATSPD) and 24–38 (SHQT…SYNH). The segment at 1-53 (MGSCCSRATSPDSGRGGANGYGYSHQTKPAQTTPSYNHPQPPPPAEVRYTPSA) is disordered. Glycine 2 is lipidated: N-myristoyl glycine. One can recognise a Protein kinase domain in the interval 85–343 (YSLGKELGRG…SAQVLQHPWL (259 aa)). Residues 91–99 (LGRGQFGVT) and lysine 114 each bind ATP. The active-site Proton acceptor is aspartate 209. Positions 348-378 (ASDKPIDSAVLSRMKQFRAMNKLKKMALKVI) are autoinhibitory domain. EF-hand domains lie at 385–420 (EEIK…LGSK), 421–456 (LSEA…RHKL), 457–492 (ERDE…HEMG), and 497–527 (IKDI…GGMQ). Ca(2+) contacts are provided by aspartate 398, aspartate 400, serine 402, threonine 404, glutamate 409, aspartate 434, aspartate 436, asparagine 438, serine 440, glutamate 445, aspartate 470, aspartate 472, serine 474, glutamate 481, aspartate 505, aspartate 507, aspartate 509, arginine 511, and glutamate 516.

Belongs to the protein kinase superfamily. Ser/Thr protein kinase family. CDPK subfamily. Expressed in root tips, leaf veins, mesophyll cells, flower reproductive organs and mature pollen grains.

It localises to the membrane. It catalyses the reaction L-seryl-[protein] + ATP = O-phospho-L-seryl-[protein] + ADP + H(+). The catalysed reaction is L-threonyl-[protein] + ATP = O-phospho-L-threonyl-[protein] + ADP + H(+). Its activity is regulated as follows. Activated by calcium. Autophosphorylation may play an important role in the regulation of the kinase activity. Functionally, may play a role in signal transduction pathways that involve calcium as a second messenger. This chain is Calcium-dependent protein kinase 19, found in Oryza sativa subsp. japonica (Rice).